A 947-amino-acid chain; its full sequence is Serine-aspartate repeat-containing protein C (947 aa).

An N-terminal signal peptide occupies residues 1–50 (MNNKKTATNRKGMIPNRLNKFSIRKYSVGTASILVGTTLIFGLSGHEAKA). The tract at residues 51 to 164 (AEHTNGELNQ…STTPKTTTIK (114 aa)) is disordered. The segment at 51-495 (AEHTNGELNQ…GSSTANGDQK (445 aa)) is ligand binding A region. Over residues 56-71 (GELNQSKNETTAPSEN) the composition is skewed to polar residues. Residues 72-83 (KTTKKVDSRQLK) show a composition bias toward basic and acidic residues. Residues 84–155 (DNTQTATADQ…SNLTQAKDVS (72 aa)) are compositionally biased toward polar residues. CNA-B domains follow at residues 496–606 (KYNL…YKTP) and 607–717 (KYSL…EEET). A disordered region spans residues 678-927 (TQTGTNTTED…NNSNNGTLFG (250 aa)). Composition is skewed to acidic residues over residues 685 to 695 (TEDDKDADGGE) and 712 to 886 (YYEE…DSDS). Positions 910-914 (LPETG) match the LPXTG sorting signal motif. A compositionally biased stretch (low complexity) spans 912 to 927 (ETGSENNNSNNGTLFG). The residue at position 913 (Thr913) is a Pentaglycyl murein peptidoglycan amidated threonine. Positions 914–947 (GSENNNSNNGTLFGGLFAALGSLLLFGRRKKQNK) are cleaved as a propeptide — removed by sortase.

The protein belongs to the serine-aspartate repeat-containing protein (SDr) family. As to quaternary structure, homodimerizes; via N2-Domain. Interacts with host NRXN1; this interaction mediates bacterial attachment to host cells.

It localises to the secreted. The protein resides in the cell wall. Cell surface-associated calcium-binding protein which plays an important role in adhesion and pathogenesis. Mediates interactions with components of the extracellular matrix such as host NRXN1 to promote bacterial adhesion. This is Serine-aspartate repeat-containing protein C (sdrC) from Staphylococcus aureus (strain USA300).